Here is a 47-residue protein sequence, read N- to C-terminus: Gas vesicle protein A (47 aa).

It belongs to the gas vesicle GvpA family. As to quaternary structure, the gas vesicle shell is 2 nm thick and consists of a single layer of this protein. It forms helical ribs nearly perpendicular to the long axis of the vesicle.

The protein resides in the gas vesicle shell. Functionally, gas vesicles are hollow, gas filled proteinaceous nanostructures found in some microorganisms. During planktonic growth they allow positioning of the organism at a favorable depth for light or nutrient acquisition. GvpA forms the protein shell. This is Gas vesicle protein A from Dactylococcopsis salina (Myxobaktron salinum).